The sequence spans 342 residues: UDP-3-O-acylglucosamine N-acyltransferase (342 aa).

Histidine 238 functions as the Proton acceptor in the catalytic mechanism.

It belongs to the transferase hexapeptide repeat family. LpxD subfamily. In terms of assembly, homotrimer.

It carries out the reaction a UDP-3-O-[(3R)-3-hydroxyacyl]-alpha-D-glucosamine + a (3R)-hydroxyacyl-[ACP] = a UDP-2-N,3-O-bis[(3R)-3-hydroxyacyl]-alpha-D-glucosamine + holo-[ACP] + H(+). The protein operates within bacterial outer membrane biogenesis; LPS lipid A biosynthesis. In terms of biological role, catalyzes the N-acylation of UDP-3-O-acylglucosamine using 3-hydroxyacyl-ACP as the acyl donor. Is involved in the biosynthesis of lipid A, a phosphorylated glycolipid that anchors the lipopolysaccharide to the outer membrane of the cell. In Tolumonas auensis (strain DSM 9187 / NBRC 110442 / TA 4), this protein is UDP-3-O-acylglucosamine N-acyltransferase.